The following is a 907-amino-acid chain: Protein translocase subunit SecA (907 aa).

ATP contacts are provided by residues Gln87, 105–109 (GEGKT), and Asp506. Over residues 834–850 (LEQQREEEAREQAEKMK) the composition is skewed to basic and acidic residues. Positions 834 to 907 (LEQQREEEAR…KYKQCHGKIE (74 aa)) are disordered. Positions 864–875 (QPQPSQQQGEQP) are enriched in low complexity. Cys891, Cys893, Cys902, and His903 together coordinate Zn(2+). Over residues 897 to 907 (KKYKQCHGKIE) the composition is skewed to basic residues.

Belongs to the SecA family. As to quaternary structure, monomer and homodimer. Part of the essential Sec protein translocation apparatus which comprises SecA, SecYEG and auxiliary proteins SecDF-YajC and YidC. Requires Zn(2+) as cofactor.

Its subcellular location is the cell inner membrane. The protein resides in the cytoplasm. The enzyme catalyses ATP + H2O + cellular proteinSide 1 = ADP + phosphate + cellular proteinSide 2.. In terms of biological role, part of the Sec protein translocase complex. Interacts with the SecYEG preprotein conducting channel. Has a central role in coupling the hydrolysis of ATP to the transfer of proteins into and across the cell membrane, serving both as a receptor for the preprotein-SecB complex and as an ATP-driven molecular motor driving the stepwise translocation of polypeptide chains across the membrane. In Alcanivorax borkumensis (strain ATCC 700651 / DSM 11573 / NCIMB 13689 / SK2), this protein is Protein translocase subunit SecA.